The chain runs to 336 residues: Glycerol-3-phosphate dehydrogenase [NAD(P)+] (336 aa).

The NADPH site is built by Trp-16 and Lys-109. The sn-glycerol 3-phosphate site is built by Lys-109, Gly-137, and Ser-139. Position 141 (Ala-141) interacts with NADPH. Residues Lys-192, Asp-245, Ser-255, Arg-256, and Asn-257 each contribute to the sn-glycerol 3-phosphate site. Lys-192 (proton acceptor) is an active-site residue. Residue Arg-256 coordinates NADPH. Residues Val-280 and Glu-282 each coordinate NADPH.

This sequence belongs to the NAD-dependent glycerol-3-phosphate dehydrogenase family.

It localises to the cytoplasm. It carries out the reaction sn-glycerol 3-phosphate + NAD(+) = dihydroxyacetone phosphate + NADH + H(+). The catalysed reaction is sn-glycerol 3-phosphate + NADP(+) = dihydroxyacetone phosphate + NADPH + H(+). The protein operates within membrane lipid metabolism; glycerophospholipid metabolism. Functionally, catalyzes the reduction of the glycolytic intermediate dihydroxyacetone phosphate (DHAP) to sn-glycerol 3-phosphate (G3P), the key precursor for phospholipid synthesis. The sequence is that of Glycerol-3-phosphate dehydrogenase [NAD(P)+] from Hyphomonas neptunium (strain ATCC 15444).